The following is a 257-amino-acid chain: Probable 6-phosphogluconolactonase (257 aa).

It belongs to the glucosamine/galactosamine-6-phosphate isomerase family. 6-phosphogluconolactonase subfamily.

It carries out the reaction 6-phospho-D-glucono-1,5-lactone + H2O = 6-phospho-D-gluconate + H(+). Its pathway is carbohydrate degradation; pentose phosphate pathway; D-ribulose 5-phosphate from D-glucose 6-phosphate (oxidative stage): step 2/3. In terms of biological role, hydrolysis of 6-phosphogluconolactone to 6-phosphogluconate. In Schizosaccharomyces pombe (strain 972 / ATCC 24843) (Fission yeast), this protein is Probable 6-phosphogluconolactonase.